Consider the following 532-residue polypeptide: MKKIMLIASAMSALSLPFSASAIELGEEGLECGPYAKVGVVGGMITGVESARLDPADAEGKKHLSLTNGLPFGGTLAAGMTIAPGFRAEIGVMYLTNITAQVEEGKVKADSVGETKADSVGGKDAPIRKRFKLTPPQPTIMPISIAVRDFGIDIPNQTSAASTSRSLRLNDEQRAAARIAWLKNCAGIDYRVKNPNDPNGPMVINPILLNIPQGNPNPVGNPPQRANPPAGFAIHNHEQWRHLVVGLAALSNANKPSASPVKVLSDKITQIYSDIKHLADIAGIDVPDTSLPNSASVEQIQNKMQELNDLLEELRESFDGYLGGNAFANQIQLNFVMPQQAQQQGQGQQQQAQATAQEAVAAAAVRLLNGNDQIAQLYKDLVKLQRHAGIKKAMEKLAAQQEEDAKNQGEGDCKQQQGTSEKSKKGKDKEAEFDLSMIVGQVKLYADVMITESVSIYAGVGAGLAYTSGKIDNKDIKGHTGMVASGALGVAINAAEGVYVDIEGSYMYSFSKIEEKYSINPLMASVSVRYNF.

The signal sequence occupies residues M1–A22. Residues T67–R87 form a helical membrane-spanning segment. The tract at residues Q401–D428 is disordered. The span at E403–C413 shows a compositional bias: basic and acidic residues. Residues T480–V500 form a helical membrane-spanning segment.

The protein localises to the cell membrane. Functionally, may be an adherent factor for rickettsial adsorption to the host-cell surface and a determinant of virulence of individual rickettsial strain. It is the major outer membrane protein. The sequence is that of 56 kDa type-specific antigen from Orientia tsutsugamushi (Rickettsia tsutsugamushi).